Reading from the N-terminus, the 222-residue chain is Transcriptional regulatory protein BasR (222 aa).

The 115-residue stretch at 2-116 (KILIVEDDTL…ELHARIRALL (115 aa)) folds into the Response regulatory domain. Aspartate 51 bears the 4-aspartylphosphate mark. Residues 124 to 218 (ESELIVGNLT…VRGFGYMLVA (95 aa)) constitute a DNA-binding region (ompR/PhoB-type).

As to quaternary structure, homodimer. In terms of processing, phosphorylated by BasS.

The protein resides in the cytoplasm. Member of the two-component regulatory system BasS/BasR. BasR induces the transcription of the ugd, ais, arnBCADTEF and eptA-basRS loci, all involved in resistance to polymyxin. The polypeptide is Transcriptional regulatory protein BasR (basR) (Escherichia coli (strain K12)).